An 82-amino-acid polypeptide reads, in one-letter code: Small ribosomal subunit protein bS16 (82 aa).

The protein belongs to the bacterial ribosomal protein bS16 family.

This is Small ribosomal subunit protein bS16 from Pectobacterium carotovorum subsp. carotovorum (strain PC1).